The chain runs to 312 residues: Ribosomal protein L11 methyltransferase (312 aa).

S-adenosyl-L-methionine-binding residues include Thr162, Gly183, Asp205, and Asn248.

Belongs to the methyltransferase superfamily. PrmA family.

The protein resides in the cytoplasm. The enzyme catalyses L-lysyl-[protein] + 3 S-adenosyl-L-methionine = N(6),N(6),N(6)-trimethyl-L-lysyl-[protein] + 3 S-adenosyl-L-homocysteine + 3 H(+). In terms of biological role, methylates ribosomal protein L11. This chain is Ribosomal protein L11 methyltransferase, found in Geobacillus kaustophilus (strain HTA426).